A 1029-amino-acid chain; its full sequence is Ig-like and fibronectin type-III domain-containing protein 1 (1029 aa).

The N-terminal stretch at 1 to 22 (MCNVAEDPSSFSTITIATTCRA) is a signal peptide. Residues 23-918 (EWPKVSPCIA…RRSASKGSSS (896 aa)) are Extracellular-facing. N-linked (GlcNAc...) asparagine glycosylation is found at Asn36, Asn93, Asn120, and Asn165. The Fibronectin type-III 1 domain maps to 90–181 (APGNVTISEL…TAKLFSTLPT (92 aa)). The region spanning 185 to 227 (PLCTIGEPIYMNDGRVMICDAVNPCPNGFRCTGAGSDLSYCCP) is the WR1 domain. Residues Asn257, Asn374, Asn409, Asn442, Asn482, Asn507, and Asn552 are each glycosylated (N-linked (GlcNAc...) asparagine). Fibronectin type-III domains lie at 330–417 (AVRN…TKPA) and 427–523 (APEK…AQKD). The region spanning 619–710 (ASVTMKKDKI…SRVEASSEVI (92 aa)) is the Ig-like C2-type domain. A disulfide bridge links Cys640 with Cys693. The N-linked (GlcNAc...) asparagine glycan is linked to Asn753. The Fibronectin type-III 4 domain maps to 817-909 (APSEVSNVRI…SAIPKDSEPR (93 aa)). Residues 919–939 (AFWIVVILVVFGVLIAGLAVL) form a helical membrane-spanning segment. The Cytoplasmic segment spans residues 940–1029 (SKRRELPYPI…NGMRYAKLET (90 aa)). The disordered stretch occupies residues 988 to 1021 (SATTGTAAATQSEWQSANLEANSTTDNSHEYRNG). A compositionally biased stretch (polar residues) spans 998–1013 (QSEWQSANLEANSTTD).

It localises to the cell membrane. This is Ig-like and fibronectin type-III domain-containing protein 1 from Caenorhabditis elegans.